A 109-amino-acid polypeptide reads, in one-letter code: Glutaredoxin-C13 (109 aa).

The region spanning 2–108 (AEMVARLASE…PMLKNAGALW (107 aa)) is the Glutaredoxin domain. Cysteine 22 and cysteine 25 are oxidised to a cystine. The Responsive for interaction with TGA factors signature appears at 106-109 (ALWL).

Belongs to the glutaredoxin family. CC-type subfamily.

The protein localises to the cytoplasm. The protein resides in the nucleus. Functionally, has a glutathione-disulfide oxidoreductase activity in the presence of NADPH and glutathione reductase. Reduces low molecular weight disulfides and proteins. The protein is Glutaredoxin-C13 (GRXC13) of Oryza sativa subsp. japonica (Rice).